The following is a 160-amino-acid chain: CXXC motif containing zinc binding protein (160 aa).

4 residues coordinate Zn(2+): Cys-33, Cys-36, Cys-67, and Cys-70. Ser-75 is subject to Phosphoserine.

It belongs to the UPF0587 family. Monomer.

The polypeptide is CXXC motif containing zinc binding protein (Homo sapiens (Human)).